A 314-amino-acid polypeptide reads, in one-letter code: Short-chain dehydrogenase/reductase drtF (314 aa).

NADP(+)-binding residues include Val26, Lys50, Asp73, Asn100, Tyr185, and Lys189. Tyr185 acts as the Proton acceptor in catalysis. Catalysis depends on Lys189, which acts as the Lowers pKa of active site Tyr.

It belongs to the short-chain dehydrogenases/reductases (SDR) family.

Its pathway is secondary metabolite biosynthesis; terpenoid biosynthesis. Its function is as follows. Short-chain dehydrogenase/reductase; part of the gene cluster that mediates the biosynthesis of various drimane-type sesquiterpene esters, compounds that exhibit diverse biological activities and are widely present in eukaryotes. The pathway begins with the synthesis of the backbone drimenol by the terpene cyclase drtB using farnesyl pyrophosphate (FPP) as substrate. The cytochrome P450 monooxygenase drtD is then responsible for the hydroxylations at C-6, C-9 and C-12, as well as the oxidation of hydroxyl groups at C-6 and C-11 to a ketone and an aldehyde, respectively. Then, the biosynthesis can go in two directions, either the hydroxylated drimenol is further hydroxylated at C-2 and C-3 by an enzyme(s) not associated with the drt cluster, or the FAD-binding oxidoreductase drtC further oxidizes C-11 or C-12 to form the butyrolactone ring. DrtB, drtD and drtC are solely responsible for the formation of the different drimane structures observed during drimane sesquiterpenes biosynthesis. The polyketide synthase drtA synthesizes different lengths (C6 and C8) of PKS chains, which are then oxidized to varying degrees by the short-chain dehydrogenase drtF. Finally, these PKS chains are transferred onto drimane sesquiterpenes by the acyltransferase drtE, forming the sesquiterpene esters. In addition to the different fatty acyl-CoA chains produced by drtA, drtE is also able to use cinnamoyl-CoA as a substrate. This Aspergillus calidoustus protein is Short-chain dehydrogenase/reductase drtF.